We begin with the raw amino-acid sequence, 570 residues long: Hydroxylamine reductase (570 aa).

[4Fe-4S] cluster contacts are provided by Cys-5, Cys-8, Cys-17, and Cys-23. Positions 266, 290, 334, 425, 453, 478, 513, and 515 each coordinate hybrid [4Fe-2O-2S] cluster. The residue at position 425 (Cys-425) is a Cysteine persulfide.

The protein belongs to the HCP family. The cofactor is [4Fe-4S] cluster. Hybrid [4Fe-2O-2S] cluster serves as cofactor.

The protein resides in the cytoplasm. It carries out the reaction A + NH4(+) + H2O = hydroxylamine + AH2 + H(+). In terms of biological role, catalyzes the reduction of hydroxylamine to form NH(3) and H(2)O. This is Hydroxylamine reductase from Clostridium botulinum (strain Okra / Type B1).